The primary structure comprises 207 residues: Thiamine-phosphate synthase (207 aa).

4-amino-2-methyl-5-(diphosphooxymethyl)pyrimidine is bound by residues 36–40 and D68; that span reads QLRIK. Residues D69 and D88 each contribute to the Mg(2+) site. 4-amino-2-methyl-5-(diphosphooxymethyl)pyrimidine is bound at residue S106. 132–134 is a binding site for 2-[(2R,5Z)-2-carboxy-4-methylthiazol-5(2H)-ylidene]ethyl phosphate; that stretch reads TKT. K135 is a 4-amino-2-methyl-5-(diphosphooxymethyl)pyrimidine binding site. Residues G162 and 182 to 183 contribute to the 2-[(2R,5Z)-2-carboxy-4-methylthiazol-5(2H)-ylidene]ethyl phosphate site; that span reads VS.

It belongs to the thiamine-phosphate synthase family. It depends on Mg(2+) as a cofactor.

The catalysed reaction is 2-[(2R,5Z)-2-carboxy-4-methylthiazol-5(2H)-ylidene]ethyl phosphate + 4-amino-2-methyl-5-(diphosphooxymethyl)pyrimidine + 2 H(+) = thiamine phosphate + CO2 + diphosphate. The enzyme catalyses 2-(2-carboxy-4-methylthiazol-5-yl)ethyl phosphate + 4-amino-2-methyl-5-(diphosphooxymethyl)pyrimidine + 2 H(+) = thiamine phosphate + CO2 + diphosphate. It carries out the reaction 4-methyl-5-(2-phosphooxyethyl)-thiazole + 4-amino-2-methyl-5-(diphosphooxymethyl)pyrimidine + H(+) = thiamine phosphate + diphosphate. Its pathway is cofactor biosynthesis; thiamine diphosphate biosynthesis; thiamine phosphate from 4-amino-2-methyl-5-diphosphomethylpyrimidine and 4-methyl-5-(2-phosphoethyl)-thiazole: step 1/1. Its function is as follows. Condenses 4-methyl-5-(beta-hydroxyethyl)thiazole monophosphate (THZ-P) and 2-methyl-4-amino-5-hydroxymethyl pyrimidine pyrophosphate (HMP-PP) to form thiamine monophosphate (TMP). This is Thiamine-phosphate synthase from Pyrococcus abyssi (strain GE5 / Orsay).